We begin with the raw amino-acid sequence, 246 residues long: Probable transcriptional regulatory protein CKO_01097 (246 aa).

The tract at residues 1 to 20 is disordered; it reads MAGHSKWANTRHRKAAQDAK.

The protein belongs to the TACO1 family.

It localises to the cytoplasm. This is Probable transcriptional regulatory protein CKO_01097 from Citrobacter koseri (strain ATCC BAA-895 / CDC 4225-83 / SGSC4696).